The sequence spans 453 residues: Zinc finger protein Pegasus (453 aa).

3 C2H2-type zinc fingers span residues 101–123 (LKCR…IRIH), 129–151 (HRCH…MRSH), and 157–180 (YKCE…RRKH). Positions 279–293 (GQLSSLPPDTQNPAS) are enriched in polar residues. A disordered region spans residues 279-375 (GQLSSLPPDT…QPSTPAPALP (97 aa)). Positions 315 to 332 (CSSAVSTSVAQSSSPASP) are enriched in low complexity. Polar residues predominate over residues 356 to 368 (RTSTPSISNSQPS). 2 consecutive C2H2-type zinc fingers follow at residues 383 to 405 (HHCQ…MGCH) and 411 to 438 (FQCN…CCQH).

This sequence belongs to the Ikaros C2H2-type zinc-finger protein family. Probably self-associates.

Its subcellular location is the nucleus. Functionally, transcriptional repressor that binds the core 5'GNNTGTNG-3' DNA consensus sequence. The chain is Zinc finger protein Pegasus (ikzf5) from Xenopus laevis (African clawed frog).